A 178-amino-acid chain; its full sequence is MTGGAQELLLSRIRDVPDYPQPGVVFKDITPLLADPEAFSVLTEALAEVCVRHGATKVVGLEARGFILGAPVAVRAGLGFIPIRKAGKLPGATLSQAYALEYGTAEIEVHAEDLTPDDRVMVIDDVLATGGTAAAAMELIRRGGADVAGLAVLMELGFLGGRARLEPTLAALEALLAL.

The protein belongs to the purine/pyrimidine phosphoribosyltransferase family. In terms of assembly, homodimer.

Its subcellular location is the cytoplasm. The catalysed reaction is AMP + diphosphate = 5-phospho-alpha-D-ribose 1-diphosphate + adenine. It functions in the pathway purine metabolism; AMP biosynthesis via salvage pathway; AMP from adenine: step 1/1. Catalyzes a salvage reaction resulting in the formation of AMP, that is energically less costly than de novo synthesis. This is Adenine phosphoribosyltransferase from Streptomyces clavuligerus.